We begin with the raw amino-acid sequence, 188 residues long: Probable manganese efflux pump MntP (188 aa).

A run of 5 helical transmembrane segments spans residues 3–23 (ITATVLLAFGMSMDAFAASIG), 66–86 (LEWNHWIAFVLLIFLGGRMII), 106–128 (WLLVTTAIATSLDAMAVGVGLAF), 143–163 (ATLIMSTLGMMVGRFIGSIIG), and 168–188 (ILGGLVLIGIGVQILWTHFHG).

It belongs to the MntP (TC 9.B.29) family.

Its subcellular location is the cell inner membrane. Probably functions as a manganese efflux pump. This Shigella flexneri serotype 5b (strain 8401) protein is Probable manganese efflux pump MntP.